A 119-amino-acid chain; its full sequence is Large ribosomal subunit protein eL31z (119 aa).

Belongs to the eukaryotic ribosomal protein eL31 family.

The sequence is that of Large ribosomal subunit protein eL31z (RPL31A) from Arabidopsis thaliana (Mouse-ear cress).